Consider the following 597-residue polypeptide: Arginine--tRNA ligase (597 aa).

The 'HIGH' region signature appears at 125–135 (PNTNKPLHLGH).

Belongs to the class-I aminoacyl-tRNA synthetase family. As to quaternary structure, monomer.

It localises to the cytoplasm. It carries out the reaction tRNA(Arg) + L-arginine + ATP = L-arginyl-tRNA(Arg) + AMP + diphosphate. The polypeptide is Arginine--tRNA ligase (Parabacteroides distasonis (strain ATCC 8503 / DSM 20701 / CIP 104284 / JCM 5825 / NCTC 11152)).